A 119-amino-acid polypeptide reads, in one-letter code: NLYQFKNMIQCTVPNRSWWHFANYGCYCGRGGSGTPVDDLDRCCQIHDNCYGEAEKISGCWPYIKTYTYESCQGTLTSCGANNKCAASVCDCDRVAANCFARATYNDKNYNIDFNARCQ.

Disulfide bonds link cysteine 11–cysteine 72, cysteine 26–cysteine 118, cysteine 28–cysteine 44, cysteine 43–cysteine 99, cysteine 50–cysteine 92, cysteine 60–cysteine 85, and cysteine 79–cysteine 90. Residues tyrosine 27, glycine 29, and glycine 31 each contribute to the Ca(2+) site. Histidine 47 is an active-site residue. Aspartate 48 contacts Ca(2+). Residue aspartate 93 is part of the active site.

This sequence belongs to the phospholipase A2 family. Group I subfamily. D49 sub-subfamily. Ca(2+) is required as a cofactor. In terms of tissue distribution, expressed by the venom gland.

The protein resides in the secreted. It catalyses the reaction a 1,2-diacyl-sn-glycero-3-phosphocholine + H2O = a 1-acyl-sn-glycero-3-phosphocholine + a fatty acid + H(+). Its function is as follows. PLA2 catalyzes the calcium-dependent hydrolysis of the 2-acyl groups in 3-sn-phosphoglycerides. The chain is Acidic phospholipase A2 DE-II from Naja melanoleuca (Forest cobra).